A 386-amino-acid chain; its full sequence is MAEEDLYDVLGVKKDASEAEIKRAYRKLAAKYHPDVNHEPGAEKKFKKINEAYETLSDDQKRAQYDQFGTTGSQAGGFGGQGGFGGFGQGGFSQGGFGDFSDIFGDIFGGGRARRDPSAPQQGRDLQYTMTLDFMDAVFGKETSIKYNRSAECHTCHGSGAKPGKSAHTCSTCHGQGYVLRQRQTMMGMMQSQEVCPTCGGKGQVIDPADQCDTCHGAGVTEERHELKVKVPQGIDDGQQMRLQGQGEAGKNGGPYGDLYIVFRVTPSRDFKRDGNTIYVDQDISISQATLGDHVQAKTVHGDVDLKIPAGTQSETKFRLRGKGVPRVNGNGNGDEYVTVHVKTPKTLNKRQREAMLAFAAASGEDVKGVKAGFFDKLKDAFEDNK.

In terms of domain architecture, J spans 5–69; that stretch reads DLYDVLGVKK…QKRAQYDQFG (65 aa). A CR-type zinc finger spans residues 140-224; the sequence is GKETSIKYNR…CHGAGVTEER (85 aa). The Zn(2+) site is built by cysteine 153, cysteine 156, cysteine 170, cysteine 173, cysteine 196, cysteine 199, cysteine 212, and cysteine 215. 4 CXXCXGXG motif repeats span residues 153–160, 170–177, 196–203, and 212–219; these read CHTCHGSG, CSTCHGQG, CPTCGGKG, and CDTCHGAG.

The protein belongs to the DnaJ family. Homodimer. The cofactor is Zn(2+).

The protein resides in the cytoplasm. Functionally, participates actively in the response to hyperosmotic and heat shock by preventing the aggregation of stress-denatured proteins and by disaggregating proteins, also in an autonomous, DnaK-independent fashion. Unfolded proteins bind initially to DnaJ; upon interaction with the DnaJ-bound protein, DnaK hydrolyzes its bound ATP, resulting in the formation of a stable complex. GrpE releases ADP from DnaK; ATP binding to DnaK triggers the release of the substrate protein, thus completing the reaction cycle. Several rounds of ATP-dependent interactions between DnaJ, DnaK and GrpE are required for fully efficient folding. Also involved, together with DnaK and GrpE, in the DNA replication of plasmids through activation of initiation proteins. The sequence is that of Chaperone protein DnaJ from Limosilactobacillus fermentum (strain NBRC 3956 / LMG 18251) (Lactobacillus fermentum).